The chain runs to 225 residues: PKHD-type hydroxylase YbiX (225 aa).

The 100-residue stretch at 78–177 (TLSTPLFNRY…RVASFMWIQS (100 aa)) folds into the Fe2OG dioxygenase domain. 3 residues coordinate Fe cation: His96, Asp98, and His158. Arg168 serves as a coordination point for 2-oxoglutarate.

It depends on Fe(2+) as a cofactor. L-ascorbate serves as cofactor.

This Shigella dysenteriae serotype 1 (strain Sd197) protein is PKHD-type hydroxylase YbiX.